Here is a 485-residue protein sequence, read N- to C-terminus: Pup--protein ligase (485 aa).

Glutamate 33 provides a ligand contact to Mg(2+). Arginine 76 is an ATP binding site. Residue tyrosine 78 coordinates Mg(2+). Catalysis depends on aspartate 80, which acts as the Proton acceptor. Glutamate 86 lines the Mg(2+) pocket. Positions 89 and 451 each coordinate ATP.

It belongs to the Pup ligase/Pup deamidase family. Pup-conjugating enzyme subfamily.

The enzyme catalyses ATP + [prokaryotic ubiquitin-like protein]-L-glutamate + [protein]-L-lysine = ADP + phosphate + N(6)-([prokaryotic ubiquitin-like protein]-gamma-L-glutamyl)-[protein]-L-lysine.. Its pathway is protein degradation; proteasomal Pup-dependent pathway. The protein operates within protein modification; protein pupylation. Its function is as follows. Catalyzes the covalent attachment of the prokaryotic ubiquitin-like protein modifier Pup to the proteasomal substrate proteins, thereby targeting them for proteasomal degradation. This tagging system is termed pupylation. The ligation reaction involves the side-chain carboxylate of the C-terminal glutamate of Pup and the side-chain amino group of a substrate lysine. The sequence is that of Pup--protein ligase from Bifidobacterium longum subsp. infantis (strain ATCC 15697 / DSM 20088 / JCM 1222 / NCTC 11817 / S12).